Reading from the N-terminus, the 273-residue chain is Beta-lactamase OXA-133 (273 aa).

Residues 1 to 17 (MNKYFTCYVVASLFFSG) form the signal peptide. Residue Cys18 is the site of N-palmitoyl cysteine attachment. Cys18 carries the S-diacylglycerol cysteine lipid modification. Ser79 (acyl-ester intermediate) is an active-site residue. The residue at position 82 (Lys82) is an N6-carboxylysine. 216 to 218 (KTG) contacts substrate.

Belongs to the class-D beta-lactamase family.

The protein localises to the cell membrane. It carries out the reaction a beta-lactam + H2O = a substituted beta-amino acid. In terms of biological role, catalyzes the hydrolysis of beta-lactam antibiotics. The protein is Beta-lactamase OXA-133 of Acinetobacter radioresistens.